Consider the following 663-residue polypeptide: Polyunsaturated fatty acid lipoxygenase ALOX15 (663 aa).

In terms of domain architecture, PLAT spans 2–115 (GVYRVCVSTG…VQSLPVGTGC (114 aa)). The Lipoxygenase domain maps to 116-663 (TTVGDPQGLF…PSIVENSVAI (548 aa)). The Fe cation site is built by His-361, His-366, His-541, His-545, and Ile-663.

The protein belongs to the lipoxygenase family. As to quaternary structure, interacts with PEBP1; in response to IL13/interleukin-13, prevents the interaction of PEBP1 with RAF1 to activate the ERK signaling cascade. It depends on Fe cation as a cofactor. Detected in reticulocytes (at protein level).

Its subcellular location is the cytoplasm. The protein resides in the cytosol. It localises to the cell membrane. It is found in the lipid droplet. It catalyses the reaction (5Z,8Z,11Z,14Z)-eicosatetraenoate + O2 = (12S)-hydroperoxy-(5Z,8Z,10E,14Z)-eicosatetraenoate. It carries out the reaction (5Z,8Z,11Z,14Z)-eicosatetraenoate + O2 = (15S)-hydroperoxy-(5Z,8Z,11Z,13E)-eicosatetraenoate. The catalysed reaction is (9Z,12Z)-octadecadienoate + O2 = (13S)-hydroperoxy-(9Z,11E)-octadecadienoate. The enzyme catalyses (5Z,8Z,11Z,14Z)-eicosatetraenoate + 2 O2 = (14R,15S)-dihydroperoxy-(5Z,8Z,10E,12E)-eicosatetraenoate. It catalyses the reaction (5Z,8Z,11Z,14Z)-eicosatetraenoate + 2 O2 = (8S,15S)-dihydroperoxy-(5Z,9E,11Z,13E)-eicosatetraenoate. It carries out the reaction (14S,15R)-epoxy-(5Z,8Z,11Z)-eicosatrienoate + O2 = (8S)-hydroperoxy-(14S,15R)-epoxy-(5Z,9E,11Z)-eicosatrienoate. The catalysed reaction is (14S,15R)-epoxy-(5Z,8Z,11Z)-eicosatrienoate + O2 = (12S)-hydroperoxy-(14S,15R)-epoxy-(5Z,8Z,10E)-eicosatrienoate. The enzyme catalyses (14R,15S)-epoxy-(5Z,8Z,11Z)-eicosatrienoate + O2 = (5S)-hydroperoxy-(14R,15S)-epoxy-(6E,8Z,11Z)-eicosatrienoate. It catalyses the reaction (14R,15S)-epoxy-(5Z,8Z,11Z)-eicosatrienoate + O2 = (12S)-hydroperoxy-(14R,15S)-epoxy-(5Z,8Z,10E)-eicosatrienoate. It carries out the reaction (15R)-hydroperoxy-(5Z,8Z,11Z,13E)-eicosatetraenoate = 15-oxo-(5Z,8Z,11Z,13E)-eicosatetraenoate + H2O. The catalysed reaction is (15S)-hydroperoxy-(5Z,8Z,11Z,13E)-eicosatetraenoate = (14S,15S)-epoxy-(5Z,8Z,10E,12E)-eicosatetraenoate + H2O. The enzyme catalyses (12S)-hydroperoxy-(5Z,8Z,10E,14Z)-eicosatetraenoate = (8S)-hydroxy-(11S,12S)-epoxy-(5Z,9E,14Z)-eicosatrienoate. It catalyses the reaction (4Z,7Z,10Z,13Z,16Z)-docosapentaenoate + O2 = 14-hydroperoxy-(4Z,7Z,10Z,12E,16Z)-docosapentaenoate. It carries out the reaction (7Z,10Z,13Z,16Z,19Z)-docosapentaenoate + O2 = 14-hydroperoxy-(7Z,10Z,12E,16Z,19Z)-docosapentaenoate. The catalysed reaction is (4Z,7Z,10Z,13Z,16Z,19Z)-docosahexaenoate + O2 = (14S)-hydroperoxy-(4Z,7Z,10Z,12E,16Z,19Z)-docosahexaenoate. The enzyme catalyses (4Z,7Z,10Z,13Z,16Z,19Z)-docosahexaenoate + O2 = (17S)-hydroperoxy-(4Z,7Z,10Z,13Z,15E,19Z)-docosahexaenoate. It catalyses the reaction (7S)-hydroperoxy-(4Z,8E,10Z,13Z,16Z,19Z)-docosahexaenoate + O2 = (7S,14S)-dihydroperoxy-(4Z,8E,10Z,12E,16Z,19Z)-docosahexaenoate. It carries out the reaction (7S)-hydroperoxy-(4Z,8E,10Z,13Z,16Z,19Z)-docosahexaenoate + O2 = (7S,17S)-dihydroperoxy-(4Z,8E,10Z,13Z,15E,19Z)-docosahexaenoate. The catalysed reaction is (4Z,7Z,10Z,13Z,16Z,19Z)-docosahexaenoate + O2 = (11S)-hydroperoxy-(4Z,7Z,9E,13Z,16Z,19Z)-docosahexaenoate. The enzyme catalyses N-(5Z,8Z,11Z,14Z)-eicosatetraenoyl-taurine + O2 = N-(15S)-hydroperoxy-(5Z,8Z,11Z,13E)-eicosatetraenoyl-taurine. It catalyses the reaction N-(5Z,8Z,11Z,14Z)-eicosatetraenoyl-gamma-aminobutanoate + O2 = N-(15S)-hydroperoxy-(5Z,8Z,11Z,13E)-eicosatetraenoyl-gamma-aminobutanoate. It carries out the reaction N-(5Z,8Z,11Z,14Z)-eicosatetraenoyl-glycine + O2 = N-(15S)-hydroperoxy-(5Z,8Z,11Z,13E)-eicosatetraenoyl-glycine. The catalysed reaction is N-(5Z,8Z,11Z,14Z)-eicosatetraenoyl-L-alanine + O2 = N-(15S)-hydroperoxy-(5Z,8Z,11Z,13E)-eicosatetraenoyl-alanine. The enzyme catalyses N-(5Z,8Z,11Z,14Z)-eicosatetraenoyl-taurine + O2 = N-(12S)-hydroperoxy-(5Z,8Z,10E,14Z)-eicosatetraenoyl-taurine. It catalyses the reaction N-(5Z,8Z,11Z,14Z)-eicosatetraenoyl-gamma-aminobutanoate + O2 = N-(12S)-hydroperoxy-(5Z,8Z,10E,14Z)-eicosatetraenoyl-gamma-aminobutanoate. It carries out the reaction N-(5Z,8Z,11Z,14Z)-eicosatetraenoyl-glycine + O2 = N-(12S)-hydroperoxy-(5Z,8Z,10E,14Z)-eicosatetraenoyl-glycine. The catalysed reaction is N-(5Z,8Z,11Z,14Z)-eicosatetraenoyl-L-alanine + O2 = N-(12S)-hydroperoxy-(5Z,8Z,10E,14Z)-eicosatetraenoyl-alanine. It functions in the pathway lipid metabolism; hydroperoxy eicosatetraenoic acid biosynthesis. Its function is as follows. Non-heme iron-containing dioxygenase that catalyzes the stereo-specific peroxidation of free and esterified polyunsaturated fatty acids generating a spectrum of bioactive lipid mediators. It inserts peroxyl groups at C12 or C15 of arachidonate ((5Z,8Z,11Z,14Z)-eicosatetraenoate) producing both 12-hydroperoxyeicosatetraenoate/12-HPETE and 15-hydroperoxyeicosatetraenoate/15-HPETE. It may then act on 12-HPETE to produce hepoxilins, which may show pro-inflammatory properties. Can also peroxidize linoleate ((9Z,12Z)-octadecadienoate) to 13-hydroperoxyoctadecadienoate. May participate in the sequential oxidations of DHA ((4Z,7Z,10Z,13Z,16Z,19Z)-docosahexaenoate) to generate specialized pro-resolving mediators (SPMs)like resolvin D5 ((7S,17S)-diHPDHA) and (7S,14S)-diHPDHA, that actively down-regulate the immune response and have anti-aggregation properties with platelets. Can convert epoxy fatty acids to hydroperoxy-epoxides derivatives followed by an intramolecular nucleophilic substitution leading to the formation of monocyclic endoperoxides. Plays an important role during the maintenance of self-tolerance by peroxidizing membrane-bound phosphatidylethanolamine which can then signal the sorting process for clearance of apoptotic cells during inflammation and prevent an autoimmune response. In addition to its role in the immune and inflammatory responses, this enzyme may play a role in epithelial wound healing in the cornea through production of lipoxin A4 (LXA(4)) and docosahexaenoic acid-derived neuroprotectin D1 (NPD1; 10R,17S-HDHA), both lipid autacoids exhibit anti-inflammatory and neuroprotective properties. Furthermore, it may regulate actin polymerization which is crucial for several biological processes such as the phagocytosis of apoptotic cells. It is also implicated in the generation of endogenous ligands for peroxisome proliferator activated receptor (PPAR-gamma), hence modulating macrophage development and function. It may also exert a negative effect on skeletal development by regulating bone mass through this pathway. As well as participates in ER stress and downstream inflammation in adipocytes, pancreatic islets, and liver. Finally, it is also involved in the cellular response to IL13/interleukin-13. This Oryctolagus cuniculus (Rabbit) protein is Polyunsaturated fatty acid lipoxygenase ALOX15.